A 415-amino-acid polypeptide reads, in one-letter code: Histidine--tRNA ligase (415 aa).

It belongs to the class-II aminoacyl-tRNA synthetase family. As to quaternary structure, homodimer.

It localises to the cytoplasm. It carries out the reaction tRNA(His) + L-histidine + ATP = L-histidyl-tRNA(His) + AMP + diphosphate + H(+). This chain is Histidine--tRNA ligase, found in Rhodospirillum rubrum (strain ATCC 11170 / ATH 1.1.1 / DSM 467 / LMG 4362 / NCIMB 8255 / S1).